Reading from the N-terminus, the 467-residue chain is Mitochondrial adenyl nucleotide antiporter SLC25A23 (467 aa).

The segment at 1-148 is regulatory N-terminal domain; sequence MRGGSSDAER…DHFLLHSLEN (148 aa). Topologically, residues 1–187 are mitochondrial intermembrane; that stretch reads MRGGSSDAER…EKLTGMWWKQ (187 aa). 3 EF-hand domains span residues 9–44, 76–111, and 112–147; these read ERRQRWGRLFEELDSNKDGRVDVHELRQGLARLGRG, EREQRLLLMFHSLDRNQDGHIDVSEIQQSFRALGIS, and ISLEQAEKILHSMDRDGTMTIDWQEWRDHFLLHSLE. Residues aspartate 22, asparagine 24, aspartate 26, arginine 28, and glutamate 33 each contribute to the Ca(2+) site. The interval 39 to 61 is disordered; that stretch reads ARLGRGDPDRAQQGVSSDWDADP. Ca(2+) contacts are provided by aspartate 89, asparagine 91, aspartate 93, histidine 95, and glutamate 100. The tract at residues 149–158 is linker region; it reads VEDVLYFWKH. A C-terminal transmembrane transporter domain region spans residues 164-467; it reads IGECLTVPDE…MKQALGVTSR (304 aa). Solcar repeat units follow at residues 182–268, 276–361, and 373–461; these read GMWW…IKRA, LHVQ…LKNR, and PGIL…MKQA. The helical transmembrane segment at 188-205 threads the bilayer; the sequence is LVAGAVAGAVSRTGTAPL. Residues 206–242 are Mitochondrial matrix-facing; sequence DRLKVFMQVHASKSNRLNILGGLRNMIQEGGVLSLWR. Residues 243 to 262 traverse the membrane as a helical segment; the sequence is GNGINVLKIAPESAIKFMAY. The Mitochondrial intermembrane portion of the chain corresponds to 263–285; it reads EQIKRAIRGQQETLHVQERFVAG. The helical transmembrane segment at 286-299 threads the bilayer; it reads SLAGATAQTIIYPM. At 300–335 the chain is on the mitochondrial matrix side; the sequence is EVLKTRLTLRRTGQYKGLLDCAKRILEREGPRAFYR. Residues 336–355 form a helical membrane-spanning segment; sequence GYLPNVLGIIPYAGIDLAVY. At 356–378 the chain is on the mitochondrial intermembrane side; the sequence is ETLKNRWLQQYSHESANPGILVL. Residues 379-396 traverse the membrane as a helical segment; the sequence is LGCGTISSTCGQIASYPL. Over 397–435 the chain is Mitochondrial matrix; that stretch reads ALVRTRMQAQASIEGGPQVSMVGLLRHILSQEGVWGLYR. Residues 436–455 form a helical membrane-spanning segment; the sequence is GIAPNFMKVIPAVSISYVVY. Residues 456-467 are Mitochondrial intermembrane-facing; it reads ENMKQALGVTSR.

It belongs to the mitochondrial carrier (TC 2.A.29) family. In terms of assembly, interacts with MCU. Interacts with MICU1.

It is found in the mitochondrion inner membrane. The catalysed reaction is Mg(2+)(out) + phosphate(in) + ATP(out) = Mg(2+)(in) + phosphate(out) + ATP(in). It catalyses the reaction ADP(out) + phosphate(in) + H(+)(out) = ADP(in) + phosphate(out) + H(+)(in). The enzyme catalyses AMP(out) + phosphate(in) = AMP(in) + phosphate(out). It carries out the reaction phosphate(in) + ATP(out) + 2 H(+)(out) = phosphate(out) + ATP(in) + 2 H(+)(in). The catalysed reaction is dADP(in) + ADP(out) = dADP(out) + ADP(in). It catalyses the reaction Mg(2+)(in) + ADP(out) + ATP(in) + H(+)(out) = Mg(2+)(out) + ADP(in) + ATP(out) + H(+)(in). The enzyme catalyses ADP(out) + diphosphate(in) = ADP(in) + diphosphate(out). It carries out the reaction dAMP(in) + ADP(out) + H(+)(out) = dAMP(out) + ADP(in) + H(+)(in). The catalysed reaction is 3'-AMP(in) + ADP(out) + H(+)(out) = 3'-AMP(out) + ADP(in) + H(+)(in). It catalyses the reaction dAMP(out) + phosphate(in) = dAMP(in) + phosphate(out). The enzyme catalyses 3'-AMP(out) + phosphate(in) = 3'-AMP(in) + phosphate(out). It carries out the reaction dADP(out) + phosphate(in) + H(+)(out) = dADP(in) + phosphate(out) + H(+)(in). Its activity is regulated as follows. Activated by an increase in cytosolic calcium levels that induce a conformational change of the N-terminal regulatory domain, uncapping the channel and allowing transport. Its function is as follows. Electroneutral antiporter that mediates the transport of adenine nucleotides through the inner mitochondrial membrane. Originally identified as an ATP-magnesium/inorganic phosphate antiporter, it also acts as a broad specificity adenyl nucleotide antiporter. By regulating the mitochondrial matrix adenine nucleotide pool could adapt to changing cellular energetic demands and indirectly regulate adenine nucleotide-dependent metabolic pathways. Also acts as a regulator of mitochondrial calcium uptake and can probably transport trace amounts of other divalent metal cations in complex with ATP. In vitro, a low activity is also observed with guanyl and pyrimidine nucleotides. In Mus musculus (Mouse), this protein is Mitochondrial adenyl nucleotide antiporter SLC25A23.